The primary structure comprises 208 residues: Uridine kinase (208 aa).

11-18 (GGTGSGKS) lines the ATP pocket.

It belongs to the uridine kinase family.

It is found in the cytoplasm. The enzyme catalyses uridine + ATP = UMP + ADP + H(+). It carries out the reaction cytidine + ATP = CMP + ADP + H(+). The protein operates within pyrimidine metabolism; CTP biosynthesis via salvage pathway; CTP from cytidine: step 1/3. Its pathway is pyrimidine metabolism; UMP biosynthesis via salvage pathway; UMP from uridine: step 1/1. The polypeptide is Uridine kinase (Clostridium perfringens (strain ATCC 13124 / DSM 756 / JCM 1290 / NCIMB 6125 / NCTC 8237 / Type A)).